A 260-amino-acid polypeptide reads, in one-letter code: Hemin import ATP-binding protein HmuV (260 aa).

The 237-residue stretch at 3–239 (LHAQQISLSI…QRLSEVYGCD (237 aa)) folds into the ABC transporter domain. 35-42 (GPNGSGKS) contacts ATP.

It belongs to the ABC transporter superfamily. Heme (hemin) importer (TC 3.A.1.14.5) family. As to quaternary structure, the complex is composed of two ATP-binding proteins (HmuV), two transmembrane proteins (HmuU) and a solute-binding protein (HmuT).

The protein resides in the cell inner membrane. Functionally, part of the ABC transporter complex HmuTUV involved in hemin import. Responsible for energy coupling to the transport system. The sequence is that of Hemin import ATP-binding protein HmuV from Ruegeria sp. (strain TM1040) (Silicibacter sp.).